An 80-amino-acid polypeptide reads, in one-letter code: RNA-binding protein Hfq (80 aa).

Residues 10 to 70 form the Sm domain; the sequence is DLFLNTVRKQ…ISTIMPGQPL (61 aa).

The protein belongs to the Hfq family. Homohexamer.

RNA chaperone that binds small regulatory RNA (sRNAs) and mRNAs to facilitate mRNA translational regulation in response to envelope stress, environmental stress and changes in metabolite concentrations. Also binds with high specificity to tRNAs. This Rhizobium meliloti (strain 1021) (Ensifer meliloti) protein is RNA-binding protein Hfq.